The following is a 637-amino-acid chain: Clathrin coat assembly protein AP180A (637 aa).

The region spanning 1–126 (MTTYFKLVKG…REFGKIKKDY (126 aa)) is the ENTH domain. The tract at residues 555 to 637 (TQNHLQQQQQ…YANNLNLIDM (83 aa)) is disordered. Low complexity-rich tracts occupy residues 560–579 (QQQQ…QPQQ) and 600–622 (QPQN…TQQP). Residues 587–637 (AGANPVTNITGTVQPQNFPFYPQQQPQPEQSQTQQPVLGNQYANNLNLIDM) form a clathrin-binding region. Positions 623-637 (VLGNQYANNLNLIDM) are enriched in polar residues.

This sequence belongs to the AP180 family. As to quaternary structure, interacts with PAN1 and the clathrin heavy and light chains CHC1 and CLC1.

The protein resides in the bud. The protein localises to the bud neck. Its subcellular location is the cell membrane. It is found in the cytoplasm. Involved in endocytosis and clathrin cage assembly. This is Clathrin coat assembly protein AP180A (YAP1801) from Saccharomyces cerevisiae (strain ATCC 204508 / S288c) (Baker's yeast).